We begin with the raw amino-acid sequence, 206 residues long: Purine nucleoside phosphorylase aq_167 (206 aa).

Residues His-42, Cys-78, and His-93 each contribute to the Zn(2+) site.

This sequence belongs to the purine nucleoside phosphorylase YfiH/LACC1 family. In terms of assembly, homodimer. Cu(2+) is required as a cofactor. The cofactor is Zn(2+).

The enzyme catalyses adenosine + phosphate = alpha-D-ribose 1-phosphate + adenine. It catalyses the reaction S-methyl-5'-thioadenosine + phosphate = 5-(methylsulfanyl)-alpha-D-ribose 1-phosphate + adenine. It carries out the reaction inosine + phosphate = alpha-D-ribose 1-phosphate + hypoxanthine. The catalysed reaction is adenosine + H2O + H(+) = inosine + NH4(+). Its function is as follows. Purine nucleoside enzyme that catalyzes the phosphorolysis of adenosine and inosine nucleosides, yielding D-ribose 1-phosphate and the respective free bases, adenine and hypoxanthine. Also catalyzes the phosphorolysis of S-methyl-5'-thioadenosine into adenine and S-methyl-5-thio-alpha-D-ribose 1-phosphate. Also has adenosine deaminase activity. This Aquifex aeolicus (strain VF5) protein is Purine nucleoside phosphorylase aq_167.